The primary structure comprises 260 residues: Proliferating cell nuclear antigen (260 aa).

A DNA-binding region spans residues 61–80; it reads RCDRNISMGMNLGSMSKILI.

The protein belongs to the PCNA family. Homotrimer. Forms a complex with activator 1 heteropentamer in the presence of ATP.

It localises to the nucleus. Its function is as follows. This protein is an auxiliary protein of DNA polymerase delta and is involved in the control of eukaryotic DNA replication by increasing the polymerase's processibility during elongation of the leading strand. This is Proliferating cell nuclear antigen (PCNA) from Bombyx mori (Silk moth).